The sequence spans 403 residues: RNA-binding motif, single-stranded-interacting protein 1 (403 aa).

Residues 30 to 56 (PAHPMAPPSPSTTSSNNNSSSSSNSGW) are disordered. The segment covering 40 to 54 (STTSSNNNSSSSSNS) has biased composition (low complexity). 2 consecutive RRM domains span residues 62–135 (TNLY…MAKQ) and 141–226 (TNLY…FADG). Residue Thr208 is modified to Phosphothreonine. Positions 382–395 (GQQQVAVETSNDHS) are enriched in polar residues. Positions 382–403 (GQQQVAVETSNDHSPYTFPPNK) are disordered.

In terms of tissue distribution, ubiquitous. Expressed in all tissues except testis.

The protein resides in the nucleus. Its function is as follows. Single-stranded DNA binding protein that interacts with the region upstream of the MYC gene. Binds specifically to the DNA sequence motif 5'-[AT]CT[AT][AT]T-3'. Probably has a role in DNA replication. The chain is RNA-binding motif, single-stranded-interacting protein 1 (Rbms1) from Mus musculus (Mouse).